We begin with the raw amino-acid sequence, 223 residues long: RNA-free ribonuclease P (223 aa).

It belongs to the HARP family.

It carries out the reaction Endonucleolytic cleavage of RNA, removing 5'-extranucleotides from tRNA precursor.. Its function is as follows. RNA-free RNase P that catalyzes the removal of the 5'-leader sequence from pre-tRNA to produce the mature 5'-terminus. This chain is RNA-free ribonuclease P, found in Methanococcus maripaludis (strain C5 / ATCC BAA-1333).